Reading from the N-terminus, the 510-residue chain is Glycerol kinase (510 aa).

Thr13 serves as a coordination point for ADP. Positions 13 and 14 each coordinate ATP. Sn-glycerol 3-phosphate is bound at residue Thr13. Residue Arg17 participates in ADP binding. Residues Arg83, Glu84, Tyr135, and Asp255 each contribute to the sn-glycerol 3-phosphate site. Arg83, Glu84, Tyr135, Asp255, and Gln256 together coordinate glycerol. Residues Thr277, Gly321, Gly421, and Asn425 each contribute to the ADP site. Residues Thr277, Gly321, and Gly421 each coordinate ATP.

This sequence belongs to the FGGY kinase family.

The catalysed reaction is glycerol + ATP = sn-glycerol 3-phosphate + ADP + H(+). The protein operates within polyol metabolism; glycerol degradation via glycerol kinase pathway; sn-glycerol 3-phosphate from glycerol: step 1/1. Its function is as follows. Key enzyme in the regulation of glycerol uptake and metabolism. Catalyzes the phosphorylation of glycerol to yield sn-glycerol 3-phosphate. This Halobacterium salinarum (strain ATCC 29341 / DSM 671 / R1) protein is Glycerol kinase.